The following is a 1024-amino-acid chain: Gamma-tubulin complex component 5 (1024 aa).

Disordered stretches follow at residues 153 to 203, 523 to 545, and 853 to 873; these read IGLG…GGPQ, NEDK…SSRQ, and SQAK…GPPK. Residues 189 to 198 show a composition bias toward basic and acidic residues; sequence TPLEEQDHNR. Residues 529 to 543 show a composition bias toward low complexity; sequence DSASASSGSDQGPSS. The segment covering 853–864 has biased composition (basic and acidic residues); that stretch reads SQAKEDIPRDQD.

It belongs to the TUBGCP family. Component of the gamma-tubulin ring complex (gTuRC) consisting of TUBGCP2, TUBGCP3, TUBGCP4, TUBGCP5 and TUBGCP6 and gamma-tubulin TUBG1 or TUBG2. TUBGCP2, TUBGCP3, TUBGCP4, TUBGCP5 and TUBGCP6 assemble in a 5:5:2:1:1 stoichiometry; each is associated with a gamma-tubulin, thereby arranging 14 gamma-tubulins in a helical manner. Gamma-tubulin at the first position is blocked by TUBGCP3 at the last position, allowing 13 protafilaments to grow into a microtubule. The gTuRC (via TUBGCP3 and TUBGCP6) interacts with ACTB and MZT1; the interactions form a luminal bridge that stabilizes the initial structure during complex assembly. The gTuRC (via TUBGCP2) interacts with MZT2A/MZT2B and CDK5RAP2 (via CM1 motif); the interactions play a role in gTuRC activation.

The protein resides in the cytoplasm. The protein localises to the cytoskeleton. It is found in the microtubule organizing center. Its subcellular location is the centrosome. Component of the gamma-tubulin ring complex (gTuRC) which mediates microtubule nucleation. The gTuRC regulates the minus-end nucleation of alpha-beta tubulin heterodimers that grow into microtubule protafilaments, a critical step in centrosome duplication and spindle formation. In Mus musculus (Mouse), this protein is Gamma-tubulin complex component 5 (Tubgcp5).